A 358-amino-acid polypeptide reads, in one-letter code: Phospho-N-acetylmuramoyl-pentapeptide-transferase (358 aa).

10 helical membrane passes run 24–44, 73–93, 95–115, 134–154, 169–189, 197–217, 233–253, 261–281, 286–306, and 335–355; these read FRSI…GPWV, TMGG…WADL, NVFI…GFVD, MFWQ…LPGF, ELGI…SNAV, GLAI…CYIA, GAGE…GFLW, VFMG…LAVL, ILLV…IFQV, and KIIV…ISTL.

This sequence belongs to the glycosyltransferase 4 family. MraY subfamily. Mg(2+) is required as a cofactor.

It localises to the cell inner membrane. The enzyme catalyses UDP-N-acetyl-alpha-D-muramoyl-L-alanyl-gamma-D-glutamyl-meso-2,6-diaminopimeloyl-D-alanyl-D-alanine + di-trans,octa-cis-undecaprenyl phosphate = di-trans,octa-cis-undecaprenyl diphospho-N-acetyl-alpha-D-muramoyl-L-alanyl-D-glutamyl-meso-2,6-diaminopimeloyl-D-alanyl-D-alanine + UMP. It functions in the pathway cell wall biogenesis; peptidoglycan biosynthesis. Its function is as follows. Catalyzes the initial step of the lipid cycle reactions in the biosynthesis of the cell wall peptidoglycan: transfers peptidoglycan precursor phospho-MurNAc-pentapeptide from UDP-MurNAc-pentapeptide onto the lipid carrier undecaprenyl phosphate, yielding undecaprenyl-pyrophosphoryl-MurNAc-pentapeptide, known as lipid I. The chain is Phospho-N-acetylmuramoyl-pentapeptide-transferase from Geobacter sp. (strain M21).